The following is a 100-amino-acid chain: NADH-quinone oxidoreductase subunit K (100 aa).

A run of 3 helical transmembrane segments spans residues 2-22 (IGLT…LVGI), 29-49 (IMLF…LAAI), and 60-80 (IIAF…LGLL).

Belongs to the complex I subunit 4L family. As to quaternary structure, NDH-1 is composed of 14 different subunits. Subunits NuoA, H, J, K, L, M, N constitute the membrane sector of the complex.

It localises to the cell inner membrane. The enzyme catalyses a quinone + NADH + 5 H(+)(in) = a quinol + NAD(+) + 4 H(+)(out). Its function is as follows. NDH-1 shuttles electrons from NADH, via FMN and iron-sulfur (Fe-S) centers, to quinones in the respiratory chain. The immediate electron acceptor for the enzyme in this species is believed to be ubiquinone. Couples the redox reaction to proton translocation (for every two electrons transferred, four hydrogen ions are translocated across the cytoplasmic membrane), and thus conserves the redox energy in a proton gradient. This Campylobacter concisus (strain 13826) protein is NADH-quinone oxidoreductase subunit K.